We begin with the raw amino-acid sequence, 347 residues long: Endophilin-A3 (347 aa).

The segment at 1-21 is membrane-binding amphipathic helix; it reads MSVAGLKKQFHKASQLFSEKI. The region spanning 18–249 is the BAR domain; the sequence is SEKISGAEGT…LELRISLASK (232 aa). The interval 60–87 is required for dimerization upon membrane association; it reads PNPAYRAKLGMLNTVSKLRGQVKATGYP. Residues 180 to 201 adopt a coiled-coil conformation; that stretch reads EEEIRQAVEKFEESKELAERSM. The segment at 218-254 is interaction with ARC; the sequence is FVEAALDYHRQSTEILQELQSKLELRISLASKVPKRE. Residues 255 to 288 are disordered; that stretch reads FMPKPVNMSSTDANGVGPSSSSKTPGTDTPADQP. The segment covering 261–281 has biased composition (polar residues); it reads NMSSTDANGVGPSSSSKTPGT. The region spanning 285-344 is the SH3 domain; that stretch reads ADQPCCRGLYDFEPENEGELGFKEGDIITLTNQIDENWYEGMLRGESGFFPINYVEVIVP.

It belongs to the endophilin family. As to quaternary structure, interacts with ARC, DNM1, SGIP1, SYNJ1 and DYDC1. Interacts with FASLG. Interacts with ATXN2. Interacts with BIN2.

The protein localises to the cytoplasm. It is found in the early endosome membrane. Its function is as follows. Implicated in endocytosis. May recruit other proteins to membranes with high curvature. This is Endophilin-A3 (Sh3gl3) from Mus musculus (Mouse).